The chain runs to 162 residues: Phospholipase A and acyltransferase 3 (162 aa).

Residues 1–133 (MRAPIPEPKP…VARSDQVRDV (133 aa)) are Cytoplasmic-facing. Residues 13–129 (LIEIFRPFYR…LRYGVARSDQ (117 aa)) form the LRAT domain. Residues His23 and His35 contribute to the active site. Cys113 acts as the Acyl-thioester intermediate in catalysis. A helical membrane pass occupies residues 134-154 (IIAASVAGMGLAAMSLIGVMF). Residues 155–162 (SRNKRQKQ) are Lumenal-facing.

The protein belongs to the H-rev107 family. Interacts with PPP2R1A; this interaction might decrease PP2A activity. Widely expressed. Low expression, if any, in hematopoietic cells and thymus. In testis, confined to round spermatids. Expressed in normal ovarian epithelial cells. Down-regulated in some ovarian carcinomas and testicular germ cell tumors. Highly expressed in white adipose tissue.

It is found in the cell membrane. The protein localises to the cytoplasm. Its subcellular location is the cytosol. It localises to the perinuclear region. The protein resides in the peroxisome membrane. It is found in the mitochondrion membrane. The protein localises to the nucleus envelope. Its subcellular location is the lysosome membrane. It localises to the endoplasmic reticulum membrane. The enzyme catalyses a 1,2-diacyl-sn-glycero-3-phosphocholine + H2O = a 1-acyl-sn-glycero-3-phosphocholine + a fatty acid + H(+). It catalyses the reaction a 1,2-diacyl-sn-glycero-3-phosphocholine + H2O = a 2-acyl-sn-glycero-3-phosphocholine + a fatty acid + H(+). It carries out the reaction 1,2-dihexadecanoyl-sn-glycero-3-phosphocholine + H2O = 1-hexadecanoyl-sn-glycero-3-phosphocholine + hexadecanoate + H(+). The catalysed reaction is 1,2-dihexadecanoyl-sn-glycero-3-phosphocholine + H2O = 2-hexadecanoyl-sn-glycero-3-phosphocholine + hexadecanoate + H(+). The enzyme catalyses 1-hexadecanoyl-2-(9Z-octadecenoyl)-sn-glycero-3-phosphocholine + H2O = 2-(9Z-octadecenoyl)-sn-glycero-3-phosphocholine + hexadecanoate + H(+). It catalyses the reaction 1-hexadecanoyl-2-(9Z-octadecenoyl)-sn-glycero-3-phosphocholine + H2O = 1-hexadecanoyl-sn-glycero-3-phosphocholine + (9Z)-octadecenoate + H(+). It carries out the reaction 1-hexadecanoyl-2-(5Z,8Z,11Z,14Z-eicosatetraenoyl)-sn-glycero-3-phosphocholine + H2O = 1-hexadecanoyl-sn-glycero-3-phosphocholine + (5Z,8Z,11Z,14Z)-eicosatetraenoate + H(+). The catalysed reaction is 1-hexadecanoyl-2-(5Z,8Z,11Z,14Z-eicosatetraenoyl)-sn-glycero-3-phosphocholine + H2O = 2-(5Z,8Z,11Z,14Z)-eicosatetraenoyl-sn-glycero-3-phosphocholine + hexadecanoate + H(+). The enzyme catalyses 1-hexadecanoyl-2-(9Z,12Z-octadecadienoyl)-sn-glycero-3-phosphoethanolamine + H2O = 1-hexadecanoyl-sn-glycero-3-phosphoethanolamine + (9Z,12Z)-octadecadienoate + H(+). It catalyses the reaction 1-hexadecanoyl-2-(9Z,12Z-octadecadienoyl)-sn-glycero-3-phosphoethanolamine + H2O = 2-(9Z,12Z)-octadecadienoyl-sn-glycero-3-phosphoethanolamine + hexadecanoate + H(+). It carries out the reaction 1-hexadecanoyl-2-(5Z,8Z,11Z,14Z-eicosatetraenoyl)-sn-glycero-3-phosphoethanolamine + H2O = 1-hexadecanoyl-sn-glycero-3-phosphoethanolamine + (5Z,8Z,11Z,14Z)-eicosatetraenoate + H(+). The catalysed reaction is 1-hexadecanoyl-2-(5Z,8Z,11Z,14Z-eicosatetraenoyl)-sn-glycero-3-phosphoethanolamine + H2O = 2-(5Z,8Z,11Z,14Z)-eicosatetraenoyl-sn-glycero-3-phosphoethanolamine + hexadecanoate + H(+). The enzyme catalyses 1-hexanoyl-2-acyl-sn-glycero-3-phosphocholine + H2O = hexanoate + a 2-acyl-sn-glycero-3-phosphocholine + H(+). It catalyses the reaction 1-hexanoyl-2-acyl-sn-glycero-3-phosphocholine + H2O = 1-hexanoyl-sn-glycero-3-phosphocholine + a fatty acid + H(+). It carries out the reaction 1,2-diheptadecanoyl-sn-glycero-3-phosphoethanolamine + 1-(9Z-octadecenoyl)-2-hexadecanoyl-sn-glycero-3-phosphocholine = 1,2-diheptadecanoyl-sn-glycero-3-phospho-N-hexadecanoyl-ethanolamine + 1-(9Z-octadecenoyl)-sn-glycero-3-phosphocholine + H(+). The catalysed reaction is 1,2-diheptadecanoyl-sn-glycero-3-phosphoethanolamine + 1-(9Z-octadecenoyl)-2-hexadecanoyl-sn-glycero-3-phosphocholine = 1,2-diheptadecanoyl-sn-glycero-3-phospho-N-(9Z-octadecenoyl)-ethanolamine + 2-hexadecanoyl-sn-glycero-3-phosphocholine + H(+). The enzyme catalyses 1,2-dihexanoyl-sn-glycero-3-phosphoethanolamine + 2-heptanoyl-sn-glycero-3-phosphocholine = hexanoyl-sn-glycero-3-phosphoethanolamine + 1-hexanoyl-2-heptanoyl-sn-glycero-3-phosphocholine. It catalyses the reaction 1-hexadecanoyl-2-octadecanoyl-sn-glycero-3-phosphocholine + H2O = octadecanoate + 1-hexadecanoyl-sn-glycero-3-phosphocholine + H(+). It carries out the reaction 1-hexadecanoyl-2-octadecanoyl-sn-glycero-3-phosphocholine + H2O = 2-octadecanoyl-sn-glycero-3-phosphocholine + hexadecanoate + H(+). The catalysed reaction is 1-octadecanoyl-2-hexadecanoyl-sn-glycero-3-phosphocholine + H2O = 1-octadecanoyl-sn-glycero-3-phosphocholine + hexadecanoate + H(+). The enzyme catalyses 1-octadecanoyl-2-hexadecanoyl-sn-glycero-3-phosphocholine + H2O = 2-hexadecanoyl-sn-glycero-3-phosphocholine + octadecanoate + H(+). It catalyses the reaction 1-hexadecanoyl-2-(9Z,12Z-octadecadienoyl)-sn-glycero-3-phosphocholine + H2O = (9Z,12Z)-octadecadienoate + 1-hexadecanoyl-sn-glycero-3-phosphocholine + H(+). It carries out the reaction 1-hexadecanoyl-2-(9Z,12Z-octadecadienoyl)-sn-glycero-3-phosphocholine + H2O = 2-(9Z,12Z-octadecadienoyl)-sn-glycero-3-phosphocholine + hexadecanoate + H(+). The catalysed reaction is 1,2-di-(9Z-octadecenoyl)-sn-glycero-3-phosphocholine + H2O = 2-(9Z-octadecenoyl)-sn-glycero-3-phosphocholine + (9Z)-octadecenoate + H(+). The enzyme catalyses 1,2-dihexadecanoyl-sn-glycero-3-phosphocholine + H2O = hexadecanoyl-sn-glycero-3-phosphocholine + hexadecanoate + H(+). It catalyses the reaction 1,2-di-(9Z-octadecenoyl)-sn-glycero-3-phosphocholine + H2O = 1-(9Z-octadecenoyl)-sn-glycero-3-phosphocholine + (9Z)-octadecenoate + H(+). It carries out the reaction 1,2-di-(9Z-octadecenoyl)-sn-glycero-3-phosphoethanolamine + 1,2-dihexadecanoyl-sn-glycero-3-phosphocholine = hexadecanoyl-sn-glycero-3-phosphocholine + N-hexadecanoyl-1,2-di-(9Z-octadecenoyl)-sn-glycero-3-phosphoethanolamine + H(+). The catalysed reaction is 1,2-di-(9Z,12Z-octadecadienoyl)-sn-glycero-3-phosphocholine + H2O = 1-(9Z,12Z)-octadecadienoyl-sn-glycero-3-phosphocholine + (9Z,12Z)-octadecadienoate + H(+). Exhibits both phospholipase A1/2 and acyltransferase activities. Shows phospholipase A1 (PLA1) and A2 (PLA2) activity, catalyzing the calcium-independent release of fatty acids from the sn-1 or sn-2 position of glycerophospholipids. For most substrates, PLA1 activity is much higher than PLA2 activity. Shows O-acyltransferase activity,catalyzing the transfer of a fatty acyl group from glycerophospholipid to the hydroxyl group of lysophospholipid. Shows N-acyltransferase activity, catalyzing the calcium-independent transfer of a fatty acyl group at the sn-1 position of phosphatidylcholine (PC) and other glycerophospholipids to the primary amine of phosphatidylethanolamine (PE), forming N-acylphosphatidylethanolamine (NAPE), which serves as precursor for N-acylethanolamines (NAEs). Exhibits high N-acyltransferase activity and low phospholipase A1/2 activity. Required for complete organelle rupture and degradation that occur during eye lens terminal differentiation, when fiber cells that compose the lens degrade all membrane-bound organelles in order to provide lens with transparency to allow the passage of light. Organelle membrane degradation is probably catalyzed by the phospholipase activity. Its function is as follows. (Microbial infection) Acts as a host factor for picornaviruses: required during early infection to promote viral genome release into the cytoplasm. May act as a cellular sensor of membrane damage at sites of virus entry, which relocalizes to sites of membrane rupture upon virus unfection. Facilitates safe passage of the RNA away from LGALS8, enabling viral genome translation by host ribosome. May also be involved in initiating pore formation, increasing pore size or in maintaining pores for genome delivery. The lipid-modifying enzyme activity is required for this process. This chain is Phospholipase A and acyltransferase 3, found in Homo sapiens (Human).